Reading from the N-terminus, the 344-residue chain is Mitochondrial substrate carrier family protein D (344 aa).

The Mitochondrial intermembrane portion of the chain corresponds to 1–22; it reads MDSTKTNNKWAAAGILNSVGKD. Solcar repeat units lie at residues 17-104, 119-212, and 239-327; these read NSVG…CQSY, IPYH…MKRK, and VPAW…TRNL. A helical transmembrane segment spans residues 23 to 43; that stretch reads FVAGSVGGMSSIMAGHPFDTI. Topologically, residues 44–75 are mitochondrial matrix; it reads KVMLQDASGNLPKFKNGFQALKYIMKVDGIKG. The chain crosses the membrane as a helical span at residues 76-96; it reads IYRGLSVPLFSVSFTNSVFFA. The Mitochondrial intermembrane segment spans residues 97–116; the sequence is TNNFCQSYFHPPCKDENGED. The helical transmembrane segment at 117-137 threads the bilayer; that stretch reads ILIPYHKAAAAGAIAGGVISL. Residues 138-186 lie on the Mitochondrial matrix side of the membrane; that stretch reads LITPRDLVKSKLQVQCRPFGSTNVSLQYKGPIDVIRQTIKRDGIKGMFK. The chain crosses the membrane as a helical span at residues 187 to 207; sequence GIRSTFCRDIPGDAVYFVVYE. The Mitochondrial intermembrane portion of the chain corresponds to 208–238; sequence FMKRKLLALSKNNNNNNNNNDNNDNSSPKAG. The helical transmembrane segment at 239–259 threads the bilayer; it reads VPAWVAIGAGGCAGMSFWMSI. The Mitochondrial matrix portion of the chain corresponds to 260 to 301; it reads YPMDVVKTRIQTQPDHLPPQYTSVLQTITKIYREEGISVFFR. The chain crosses the membrane as a helical span at residues 302–321; that stretch reads GFSATILRAFPTSAVNFLMY. At 322-344 the chain is on the mitochondrial intermembrane side; the sequence is ETTRNLLNSKDPFYNNNDHYNAE.

The protein belongs to the mitochondrial carrier (TC 2.A.29) family.

The protein localises to the mitochondrion inner membrane. Calcium-dependent mitochondrial solute carrier. Mitochondrial solute carriers shuttle metabolites, nucleotides, and cofactors through the mitochondrial inner membrane. The chain is Mitochondrial substrate carrier family protein D (mcfD) from Dictyostelium discoideum (Social amoeba).